The sequence spans 1086 residues: NAD(P) transhydrogenase, mitochondrial (1086 aa).

The N-terminal 43 residues, M1–W43, are a transit peptide targeting the mitochondrion. Residues C44–T474 are Mitochondrial matrix-facing. K70 is modified (N6-acetyllysine). K117 is subject to N6-succinyllysine. R182–T184 contacts NAD(+). The residue at position 224 (K224) is an N6-succinyllysine. NAD(+) is bound by residues V237, D257–R259, and G287. N6-succinyllysine is present on K294. E300 and L319 together coordinate NAD(+). An N6-succinyllysine modification is found at K331. Position 397 is an N6-acetyllysine (K397). The next 4 membrane-spanning stretches (helical) occupy residues S475–A493, M501–P521, L527–M546, and G558–T578. Residues Q579–N595 lie on the Mitochondrial matrix side of the membrane. 5 helical membrane-spanning segments follow: residues Y596–G616, I622–G642, L646–L666, L672–A691, and L702–Y722. Residues I723 to K739 are Cytoplasmic-facing. 5 consecutive transmembrane segments (helical) span residues I740–Y760, H778–M797, F801–G819, V833–L853, and L857–A879. At M880 to K1086 the chain is on the mitochondrial matrix side. NADP(+) contacts are provided by residues Y933, V965 to P970, G1007 to T1011, G1026 to M1027, K1042 to Y1049, and D1068 to A1069. An N6-succinyllysine modification is found at K1079.

In the N-terminal section; belongs to the AlaDH/PNT family. This sequence in the C-terminal section; belongs to the PNT beta subunit family. Homodimer.

The protein resides in the mitochondrion inner membrane. It catalyses the reaction NAD(+) + NADPH + H(+)(in) = NADH + NADP(+) + H(+)(out). In terms of biological role, the transhydrogenation between NADH and NADP is coupled to respiration and ATP hydrolysis and functions as a proton pump across the membrane. May play a role in reactive oxygen species (ROS) detoxification in the adrenal gland. The polypeptide is NAD(P) transhydrogenase, mitochondrial (NNT) (Ovis aries (Sheep)).